Reading from the N-terminus, the 221-residue chain is Uracil-DNA glycosylase (221 aa).

Residue aspartate 65 is the Proton acceptor of the active site.

It belongs to the uracil-DNA glycosylase (UDG) superfamily. UNG family.

It localises to the cytoplasm. The enzyme catalyses Hydrolyzes single-stranded DNA or mismatched double-stranded DNA and polynucleotides, releasing free uracil.. In terms of biological role, excises uracil residues from the DNA which can arise as a result of misincorporation of dUMP residues by DNA polymerase or due to deamination of cytosine. The chain is Uracil-DNA glycosylase from Christiangramia forsetii (strain DSM 17595 / CGMCC 1.15422 / KT0803) (Gramella forsetii).